The following is a 783-amino-acid chain: Polyribonucleotide nucleotidyltransferase 1, mitochondrial (783 aa).

The N-terminal 46 residues, methionine 1–alanine 46, are a transit peptide targeting the mitochondrion. Residues lysine 250, lysine 264, lysine 285, and lysine 289 each carry the N6-acetyllysine modification. Lysine 552 is subject to N6-succinyllysine. One can recognise a KH domain in the interval proline 605 to isoleucine 664. The S1 motif domain occupies glycine 679–lysine 750. Phosphoserine occurs at positions 754 and 782.

The protein belongs to the polyribonucleotide nucleotidyltransferase family. In terms of assembly, homotrimer; in free form. Homooligomer. Component of the mitochondrial degradosome (mtEXO) complex which is a heteropentamer containing 2 copies of SUPV3L1 and 3 copies of PNPT1. As part of the mitochondrial degradosome complex, interacts with GRSF1 in an RNA-dependent manner; the interaction enhances the activity of the complex. Interacts with TCL1A; the interaction has no effect on PNPT1 exonuclease activity.

The protein resides in the cytoplasm. It is found in the mitochondrion matrix. It localises to the mitochondrion intermembrane space. The catalysed reaction is RNA(n+1) + phosphate = RNA(n) + a ribonucleoside 5'-diphosphate. In terms of biological role, RNA-binding protein implicated in numerous RNA metabolic processes. Catalyzes the phosphorolysis of single-stranded polyribonucleotides processively in the 3'-to-5' direction. Mitochondrial intermembrane factor with RNA-processing exoribonulease activity. Component of the mitochondrial degradosome (mtEXO) complex, that degrades 3' overhang double-stranded RNA with a 3'-to-5' directionality in an ATP-dependent manner. Involved in the degradation of non-coding mitochondrial transcripts (MT-ncRNA) and tRNA-like molecules. Required for correct processing and polyadenylation of mitochondrial mRNAs. Plays a role as a cytoplasmic RNA import factor that mediates the translocation of small RNA components like the 5S RNA, the RNA subunit of ribonuclease P and the mitochondrial RNA-processing (MRP) RNA, into the mitochondrial matrix. Plays a role in mitochondrial morphogenesis and respiration; regulates the expression of the electron transport chain (ETC) components at the mRNA and protein levels. In the cytoplasm, shows a 3'-to-5' exoribonuclease mediating mRNA degradation activity; degrades c-myc mRNA upon treatment with IFNB1/IFN-beta, resulting in a growth arrest in melanoma cells. Regulates the stability of specific mature miRNAs in melanoma cells; specifically and selectively degrades miR-221, preferentially. Also plays a role in RNA cell surveillance by cleaning up oxidized RNAs. Binds to the RNA subunit of ribonuclease P, MRP RNA and miR-221 microRNA. The protein is Polyribonucleotide nucleotidyltransferase 1, mitochondrial (PNPT1) of Pongo abelii (Sumatran orangutan).